A 577-amino-acid chain; its full sequence is Thiol:disulfide interchange protein DsbD (577 aa).

A signal peptide spans 1-23; it reads MAQRIFTLIFLLWTAVGTPQVAA. Intrachain disulfides connect cysteine 131-cysteine 137 and cysteine 194-cysteine 316. 7 helical membrane passes run 182 to 202, 225 to 245, 255 to 275, 308 to 328, 338 to 358, 369 to 389, and 396 to 416; these read ALLI…YPLI, YVQG…AAGL, YILI…FGLY, LAGL…LLYI, GGTL…VTLF, WMQY…VFLL, and AWGI…ALML. In terms of domain architecture, Thioredoxin spans 437-577; sequence VISAKPLQDW…FQAHLQKFSP (141 aa). Cysteines 492 and 495 form a disulfide.

Belongs to the thioredoxin family. DsbD subfamily.

The protein localises to the cell inner membrane. The enzyme catalyses [protein]-dithiol + NAD(+) = [protein]-disulfide + NADH + H(+). The catalysed reaction is [protein]-dithiol + NADP(+) = [protein]-disulfide + NADPH + H(+). In terms of biological role, required to facilitate the formation of correct disulfide bonds in some periplasmic proteins and for the assembly of the periplasmic c-type cytochromes. Acts by transferring electrons from cytoplasmic thioredoxin to the periplasm. This transfer involves a cascade of disulfide bond formation and reduction steps. This Pectobacterium atrosepticum (strain SCRI 1043 / ATCC BAA-672) (Erwinia carotovora subsp. atroseptica) protein is Thiol:disulfide interchange protein DsbD.